Here is a 184-residue protein sequence, read N- to C-terminus: MSCRSEHIWIEPITGSRKTSNFCWAVILFLGSLGFLLVGTSSYLGRNLISLFPSQQILFFPQGIVMSFYGIAGLFISSYLWCTLSLNVGGGYDRFDRKEGMVCIFRWGFPGKNRRIFLRFLIKDIQSVRIEAKEGIYARRVLYMDIRGQGAIPLTRTDENVTPREIEQKAAELAYFLRVPIEVF.

Transmembrane regions (helical) follow at residues 22–42 (FCWA…GTSS) and 57–77 (ILFF…LFIS).

This sequence belongs to the Ycf4 family.

The protein resides in the plastid. Its subcellular location is the chloroplast thylakoid membrane. Seems to be required for the assembly of the photosystem I complex. This is Photosystem I assembly protein Ycf4 from Panax ginseng (Korean ginseng).